The primary structure comprises 729 residues: Phosphoribosylformylglycinamidine synthase subunit PurL (729 aa).

Histidine 54 is a catalytic residue. ATP contacts are provided by tyrosine 57 and lysine 96. Mg(2+) is bound at residue glutamate 98. Substrate is bound by residues 99–102 and arginine 121; that span reads SHNH. The active-site Proton acceptor is histidine 100. A Mg(2+)-binding site is contributed by aspartate 122. Glutamine 245 provides a ligand contact to substrate. Residue aspartate 273 coordinates Mg(2+). Residue 317-319 coordinates substrate; that stretch reads ETQ. The ATP site is built by aspartate 495 and glycine 532. Asparagine 533 is a binding site for Mg(2+). Position 535 (serine 535) interacts with substrate.

It belongs to the FGAMS family. In terms of assembly, monomer. Part of the FGAM synthase complex composed of 1 PurL, 1 PurQ and 2 PurS subunits.

It is found in the cytoplasm. The catalysed reaction is N(2)-formyl-N(1)-(5-phospho-beta-D-ribosyl)glycinamide + L-glutamine + ATP + H2O = 2-formamido-N(1)-(5-O-phospho-beta-D-ribosyl)acetamidine + L-glutamate + ADP + phosphate + H(+). It functions in the pathway purine metabolism; IMP biosynthesis via de novo pathway; 5-amino-1-(5-phospho-D-ribosyl)imidazole from N(2)-formyl-N(1)-(5-phospho-D-ribosyl)glycinamide: step 1/2. In terms of biological role, part of the phosphoribosylformylglycinamidine synthase complex involved in the purines biosynthetic pathway. Catalyzes the ATP-dependent conversion of formylglycinamide ribonucleotide (FGAR) and glutamine to yield formylglycinamidine ribonucleotide (FGAM) and glutamate. The FGAM synthase complex is composed of three subunits. PurQ produces an ammonia molecule by converting glutamine to glutamate. PurL transfers the ammonia molecule to FGAR to form FGAM in an ATP-dependent manner. PurS interacts with PurQ and PurL and is thought to assist in the transfer of the ammonia molecule from PurQ to PurL. This Staphylococcus haemolyticus (strain JCSC1435) protein is Phosphoribosylformylglycinamidine synthase subunit PurL.